Here is a 251-residue protein sequence, read N- to C-terminus: Small ribosomal subunit protein uS2 (251 aa).

The residue at position 2 (Ser-2) is an N-acetylserine. A disordered region spans residues 209–251; sequence EIEQQTAEEAAQEAGEEEAKEEVTEEQTEAAEWAQENADNVEW. The span at 218–237 shows a compositional bias: acidic residues; it reads AAQEAGEEEAKEEVTEEQTE. Residues 238–251 are compositionally biased toward low complexity; sequence AAEWAQENADNVEW.

This sequence belongs to the universal ribosomal protein uS2 family. In terms of assembly, component of the small ribosomal subunit. Mature ribosomes consist of a small (40S) and a large (60S) subunit. The 40S subunit contains about 33 different proteins and 1 molecule of RNA (18S). The 60S subunit contains about 49 different proteins and 3 molecules of RNA (25S, 5.8S and 5S). Interacts with RPS21.

It is found in the cytoplasm. In terms of biological role, required for the assembly and/or stability of the 40S ribosomal subunit. Required for the processing of the 20S rRNA-precursor to mature 18S rRNA in a late step of the maturation of 40S ribosomal subunits. The protein is Small ribosomal subunit protein uS2 of Candida glabrata (strain ATCC 2001 / BCRC 20586 / JCM 3761 / NBRC 0622 / NRRL Y-65 / CBS 138) (Yeast).